A 572-amino-acid chain; its full sequence is Proline--tRNA ligase (572 aa).

It belongs to the class-II aminoacyl-tRNA synthetase family. ProS type 1 subfamily. As to quaternary structure, homodimer.

Its subcellular location is the cytoplasm. The enzyme catalyses tRNA(Pro) + L-proline + ATP = L-prolyl-tRNA(Pro) + AMP + diphosphate. Functionally, catalyzes the attachment of proline to tRNA(Pro) in a two-step reaction: proline is first activated by ATP to form Pro-AMP and then transferred to the acceptor end of tRNA(Pro). As ProRS can inadvertently accommodate and process non-cognate amino acids such as alanine and cysteine, to avoid such errors it has two additional distinct editing activities against alanine. One activity is designated as 'pretransfer' editing and involves the tRNA(Pro)-independent hydrolysis of activated Ala-AMP. The other activity is designated 'posttransfer' editing and involves deacylation of mischarged Ala-tRNA(Pro). The misacylated Cys-tRNA(Pro) is not edited by ProRS. The polypeptide is Proline--tRNA ligase (Yersinia pestis bv. Antiqua (strain Antiqua)).